The following is a 64-amino-acid chain: Large ribosomal subunit protein bL28 (64 aa).

This sequence belongs to the bacterial ribosomal protein bL28 family.

The sequence is that of Large ribosomal subunit protein bL28 from Persephonella marina (strain DSM 14350 / EX-H1).